The primary structure comprises 387 residues: Adaptive-response sensory kinase SasA (387 aa).

Residues 1–97 (MGESLSPQAL…TDQLANQLPQ (97 aa)) form an interacts with KaiC region. A Histidine kinase domain is found at 158-382 (LVAHDLRNPL…TFHFTMPVYR (225 aa)). His161 is modified (phosphohistidine; by autocatalysis).

In terms of assembly, homooligomerizes. Part of the circadian clock (KaiA, KaiB, KaiC, CikA, RpaA, SasA), the composition of which varies during the circadian cycle. Binds to the CI domain of KaiC; KaiB(fs) and SasA compete for the binding site. Binds preferentially to doubly phosphorylated KaiC. Interacts with LdpA. Post-translationally, autophosphorylates in vitro.

It catalyses the reaction ATP + protein L-histidine = ADP + protein N-phospho-L-histidine.. In terms of biological role, member of the two-component regulatory system SasA/RpaA involved in genome-wide circadian gene expression. One of three clock output pathways. Participates in the KaiABC clock protein complex, which constitutes the main circadian regulator in cyanobacteria, via its interaction with KaiC. Required for robustness of the circadian rhythm of gene expression and involved in clock output. KaiC enhances the autophosphorylation activity of SasA, which then transfers its phosphate group to RpaA to activate it. Phosphotransfer is maximal when KaiC phosphorylation is active during the circadian cycle; this two-component system is activated by fully phosphorylated KaiC. A very robust clock is reconstituted with KaiA, KaiB, KaiC, SasA, CikA and RpaA; output is measured by transcription from an appropriate reporter. In addition to its output function, recruits fold-shifted KaiB (KaiB(fs)) to KaiC to cooperatively form the KaiB(6):KaiC(6) complex (independent of SasA kinase activity); at physiological concentrations increases their association. At higher concentrations SasA and KaiB(fs) compete to bind to KaiC. Mutations that decrease cooperativity nearly phenocopy a deletion mutation. Its function is as follows. Autophosphorylation and phosphotransfer activities are not essential for clock rhythms in continuous light, but they are essential for adaptation to light/dark cycles. The polypeptide is Adaptive-response sensory kinase SasA (Synechococcus elongatus (strain ATCC 33912 / PCC 7942 / FACHB-805) (Anacystis nidulans R2)).